The chain runs to 275 residues: Large ribosomal subunit protein uL2c (275 aa).

Disordered stretches follow at residues 36 to 56 (KNHR…HRGK) and 224 to 275 (VMNP…RKRK). A compositionally biased stretch (basic residues) spans 255–275 (LGRKTRKKPKYSNRYILRKRK).

It belongs to the universal ribosomal protein uL2 family. Part of the 50S ribosomal subunit.

The protein localises to the plastid. Its subcellular location is the chloroplast. The chain is Large ribosomal subunit protein uL2c (rpl2) from Gracilaria tenuistipitata var. liui (Red alga).